The following is a 130-amino-acid chain: Small ribosomal subunit protein uS9 (130 aa).

Belongs to the universal ribosomal protein uS9 family.

In Ectopseudomonas mendocina (strain ymp) (Pseudomonas mendocina), this protein is Small ribosomal subunit protein uS9.